A 530-amino-acid chain; its full sequence is Probable glycerol-3-phosphate acyltransferase 2 (530 aa).

The next 3 membrane-spanning stretches (helical) occupy residues 70–90 (YFMV…LLVL), 93–113 (FISL…SFFG), and 275–295 (LVLF…LVFG). Positions 339-344 (HRTLLD) match the HXXXXD motif motif.

It belongs to the GPAT/DAPAT family. In terms of tissue distribution, weakly or not expressed in roots, leaves, seedlings, developing siliques and flower buds.

Its subcellular location is the membrane. The enzyme catalyses sn-glycerol 3-phosphate + an acyl-CoA = a 1-acyl-sn-glycero-3-phosphate + CoA. It participates in phospholipid metabolism; CDP-diacylglycerol biosynthesis; CDP-diacylglycerol from sn-glycerol 3-phosphate: step 1/3. Its function is as follows. Esterifies acyl-group from acyl-ACP to the sn-1 position of glycerol-3-phosphate, an essential step in glycerolipid biosynthesis. The chain is Probable glycerol-3-phosphate acyltransferase 2 (GPAT2) from Arabidopsis thaliana (Mouse-ear cress).